The primary structure comprises 536 residues: Berberine bridge enzyme-like 2 (536 aa).

An N-terminal signal peptide occupies residues 1–20; the sequence is MKIFCLILFLISSFISTSLA. Cysteines 35 and 98 form a disulfide. Residues Asn-38, Asn-73, Asn-136, Asn-266, Asn-334, and Asn-352 are each glycosylated (N-linked (GlcNAc...) asparagine). The FAD-binding PCMH-type domain maps to 76-250; that stretch reads ATPKPAIVIA…LAFKIKLVPV (175 aa). Positions 113–175 form a cross-link, 6-(S-cysteinyl)-8alpha-(pros-histidyl)-FAD (His-Cys); sequence HDYEGVSYIS…KSHGFPAGVC (63 aa).

This sequence belongs to the oxygen-dependent FAD-linked oxidoreductase family. FAD is required as a cofactor. In terms of processing, the FAD cofactor is bound via a bicovalent 6-S-cysteinyl, 8alpha-N1-histidyl FAD linkage.

Its subcellular location is the secreted. The protein resides in the cell wall. The polypeptide is Berberine bridge enzyme-like 2 (Arabidopsis thaliana (Mouse-ear cress)).